Here is a 190-residue protein sequence, read N- to C-terminus: dITP/XTP pyrophosphatase (190 aa).

Residue 7–12 (SNNKNK) participates in substrate binding. Aspartate 68 functions as the Proton acceptor in the catalytic mechanism. A Mg(2+)-binding site is contributed by aspartate 68. Residues threonine 69, 148–151 (FGYD), lysine 171, and 176–177 (HR) each bind substrate.

Belongs to the HAM1 NTPase family. In terms of assembly, homodimer. Mg(2+) is required as a cofactor.

The enzyme catalyses XTP + H2O = XMP + diphosphate + H(+). The catalysed reaction is dITP + H2O = dIMP + diphosphate + H(+). It carries out the reaction ITP + H2O = IMP + diphosphate + H(+). Pyrophosphatase that catalyzes the hydrolysis of nucleoside triphosphates to their monophosphate derivatives, with a high preference for the non-canonical purine nucleotides XTP (xanthosine triphosphate), dITP (deoxyinosine triphosphate) and ITP. Seems to function as a house-cleaning enzyme that removes non-canonical purine nucleotides from the nucleotide pool, thus preventing their incorporation into DNA/RNA and avoiding chromosomal lesions. This chain is dITP/XTP pyrophosphatase, found in Flavobacterium psychrophilum (strain ATCC 49511 / DSM 21280 / CIP 103535 / JIP02/86).